We begin with the raw amino-acid sequence, 545 residues long: Membrane protein insertase YidC (545 aa).

Transmembrane regions (helical) follow at residues 350–370 (IIGN…AVLY), 424–444 (LPML…FASV), 461–481 (ADPY…QTYL), and 498–518 (PLVF…YWVV).

The protein belongs to the OXA1/ALB3/YidC family. Type 1 subfamily. Interacts with the Sec translocase complex via SecD. Specifically interacts with transmembrane segments of nascent integral membrane proteins during membrane integration.

The protein localises to the cell inner membrane. In terms of biological role, required for the insertion and/or proper folding and/or complex formation of integral membrane proteins into the membrane. Involved in integration of membrane proteins that insert both dependently and independently of the Sec translocase complex, as well as at least some lipoproteins. Aids folding of multispanning membrane proteins. The protein is Membrane protein insertase YidC of Neisseria gonorrhoeae (strain ATCC 700825 / FA 1090).